A 234-amino-acid chain; its full sequence is Ribose-5-phosphate isomerase A (234 aa).

Substrate contacts are provided by residues 39–42, 92–95, and 105–108; these read TGST, DGAD, and KGGG. Glutamate 114 functions as the Proton acceptor in the catalytic mechanism. Lysine 132 contributes to the substrate binding site.

It belongs to the ribose 5-phosphate isomerase family. Homodimer.

It carries out the reaction aldehydo-D-ribose 5-phosphate = D-ribulose 5-phosphate. It functions in the pathway carbohydrate degradation; pentose phosphate pathway; D-ribose 5-phosphate from D-ribulose 5-phosphate (non-oxidative stage): step 1/1. Catalyzes the reversible conversion of ribose-5-phosphate to ribulose 5-phosphate. This Albidiferax ferrireducens (strain ATCC BAA-621 / DSM 15236 / T118) (Rhodoferax ferrireducens) protein is Ribose-5-phosphate isomerase A.